Consider the following 647-residue polypeptide: Leishmanolysin-like peptidase (647 aa).

His-264 provides a ligand contact to Zn(2+). The active site involves Glu-265. Zn(2+) is bound by residues His-268 and His-370.

Belongs to the peptidase M8 family. Requires Zn(2+) as cofactor. As to expression, expressed in all cell lines analyzed.

The protein resides in the cytoplasm. It localises to the lipid droplet. Its function is as follows. Metalloprotease. In Homo sapiens (Human), this protein is Leishmanolysin-like peptidase (LMLN).